Consider the following 172-residue polypeptide: Epididymal secretory protein 4 (172 aa).

Positions methionine 1–alanine 21 are cleaved as a signal peptide. Cysteine 82 and cysteine 167 are oxidised to a cystine.

It belongs to the calycin superfamily. Lipocalin family. In terms of tissue distribution, secreted by the epididymal epithelial cells.

The protein localises to the secreted. It localises to the extracellular space. In terms of biological role, could transport small hydrophobic molecules into the epididymal fluid during the sperm maturation. Binds to the head region of spermatozoa and plays a key role in sperm maturation. The chain is Epididymal secretory protein 4 from Zootoca vivipara (Common lizard).